A 387-amino-acid chain; its full sequence is Protein RecA (387 aa).

80–87 (GPESSGKT) is a binding site for ATP. Residues 348–387 (LDDSEVAETEEETTASKTKAKAKKEEKXVETEEIELELQD) form a disordered region. 2 stretches are compositionally biased toward acidic residues: residues 349-360 (DDSEVAETEEET) and 378-387 (TEEIELELQD).

This sequence belongs to the RecA family.

Its subcellular location is the cytoplasm. Functionally, can catalyze the hydrolysis of ATP in the presence of single-stranded DNA, the ATP-dependent uptake of single-stranded DNA by duplex DNA, and the ATP-dependent hybridization of homologous single-stranded DNAs. It interacts with LexA causing its activation and leading to its autocatalytic cleavage. The sequence is that of Protein RecA from Lactococcus lactis subsp. cremoris (Streptococcus cremoris).